The following is a 525-amino-acid chain: Rho guanine nucleotide exchange factor gef3 (525 aa).

The DH domain maps to 72–268 (AIISVLEEFR…EIASQRMNEL (197 aa)).

It localises to the cytoplasm. Functionally, has a role in the control of cell polarity and cytokinesis. Involved in bipolar growth and septum formation. The chain is Rho guanine nucleotide exchange factor gef3 (gef3) from Schizosaccharomyces pombe (strain 972 / ATCC 24843) (Fission yeast).